Consider the following 83-residue polypeptide: Antitoxin ParD1 (83 aa).

The stretch at 33–60 forms a coiled coil; that stretch reads IRSALRLLEDRETQLRALREALEAGERS. Residues 54 to 83 form a disordered region; it reads LEAGERSGSSTPFDFDGFLGRKRADASRGR.

This sequence belongs to the ParD antitoxin family.

In terms of biological role, antitoxin component of a type II toxin-antitoxin (TA) system. In Mycobacterium tuberculosis (strain CDC 1551 / Oshkosh), this protein is Antitoxin ParD1 (parD1).